Consider the following 330-residue polypeptide: Phosphate acyltransferase (330 aa).

It belongs to the PlsX family. In terms of assembly, homodimer. Probably interacts with PlsY.

It localises to the cytoplasm. The enzyme catalyses a fatty acyl-[ACP] + phosphate = an acyl phosphate + holo-[ACP]. Its pathway is lipid metabolism; phospholipid metabolism. Functionally, catalyzes the reversible formation of acyl-phosphate (acyl-PO(4)) from acyl-[acyl-carrier-protein] (acyl-ACP). This enzyme utilizes acyl-ACP as fatty acyl donor, but not acyl-CoA. The polypeptide is Phosphate acyltransferase (Streptococcus pneumoniae (strain ATCC 700669 / Spain 23F-1)).